Here is a 223-residue protein sequence, read N- to C-terminus: DNA mismatch repair protein MutH (223 aa).

This sequence belongs to the MutH family.

It is found in the cytoplasm. Sequence-specific endonuclease that cleaves unmethylated GATC sequences. It is involved in DNA mismatch repair. The protein is DNA mismatch repair protein MutH of Shewanella baltica (strain OS223).